The primary structure comprises 367 residues: Anthranilate phosphoribosyltransferase (367 aa).

A compositionally biased stretch (low complexity) spans 1–17 (MVLSSEASSAADHSAAA). The interval 1-22 (MVLSSEASSAADHSAAAPIPTS) is disordered. Residues Gly-104, 107–108 (GD), Thr-112, 114–117 (NLST), 132–140 (KHGNRAASS), and Gly-144 contribute to the 5-phospho-alpha-D-ribose 1-diphosphate site. Anthranilate is bound at residue Gly-104. Mg(2+) is bound at residue Ser-116. Anthranilate is bound at residue Asn-135. An anthranilate-binding site is contributed by Arg-190. Positions 248 and 249 each coordinate Mg(2+).

It belongs to the anthranilate phosphoribosyltransferase family. As to quaternary structure, homodimer. Mg(2+) is required as a cofactor.

It carries out the reaction N-(5-phospho-beta-D-ribosyl)anthranilate + diphosphate = 5-phospho-alpha-D-ribose 1-diphosphate + anthranilate. It functions in the pathway amino-acid biosynthesis; L-tryptophan biosynthesis; L-tryptophan from chorismate: step 2/5. Functionally, catalyzes the transfer of the phosphoribosyl group of 5-phosphorylribose-1-pyrophosphate (PRPP) to anthranilate to yield N-(5'-phosphoribosyl)-anthranilate (PRA). This chain is Anthranilate phosphoribosyltransferase, found in Mycobacterium ulcerans (strain Agy99).